The following is a 479-amino-acid chain: Chromosomal replication initiator protein DnaA (479 aa).

Residues 1–71 are domain I, interacts with DnaA modulators; it reads MNLTQIWKAT…RNALARVVGY (71 aa). The segment at 71 to 138 is domain II; the sequence is YPVQVQVLIA…LDLASAMRSG (68 aa). The span at 86 to 99 shows a compositional bias: polar residues; it reads TEPSPSLTLSNGSR. A disordered region spans residues 86 to 106; the sequence is TEPSPSLTLSNGSRLMSDPEP. Residues 139-355 are domain III, AAA+ region; that stretch reads MLNPRYTFSS…GSLNRVAAYA (217 aa). ATP contacts are provided by G183, G185, K186, and T187. Residues 356 to 479 are domain IV, binds dsDNA; it reads ELNRAPITIE…IRERIQMLRG (124 aa).

It belongs to the DnaA family. In terms of assembly, oligomerizes as a right-handed, spiral filament on DNA at oriC.

The protein localises to the cytoplasm. Plays an essential role in the initiation and regulation of chromosomal replication. ATP-DnaA binds to the origin of replication (oriC) to initiate formation of the DNA replication initiation complex once per cell cycle. Binds the DnaA box (a 9 base pair repeat at the origin) and separates the double-stranded (ds)DNA. Forms a right-handed helical filament on oriC DNA; dsDNA binds to the exterior of the filament while single-stranded (ss)DNA is stabiized in the filament's interior. The ATP-DnaA-oriC complex binds and stabilizes one strand of the AT-rich DNA unwinding element (DUE), permitting loading of DNA polymerase. After initiation quickly degrades to an ADP-DnaA complex that is not apt for DNA replication. Binds acidic phospholipids. The polypeptide is Chromosomal replication initiator protein DnaA (Chloroflexus aurantiacus (strain ATCC 29366 / DSM 635 / J-10-fl)).